We begin with the raw amino-acid sequence, 208 residues long: Small ribosomal subunit protein uS4 (208 aa).

The 64-residue stretch at 98–161 (RRLDNVVYRL…KASPRIKELV (64 aa)) folds into the S4 RNA-binding domain.

This sequence belongs to the universal ribosomal protein uS4 family. In terms of assembly, part of the 30S ribosomal subunit. Contacts protein S5. The interaction surface between S4 and S5 is involved in control of translational fidelity.

Functionally, one of the primary rRNA binding proteins, it binds directly to 16S rRNA where it nucleates assembly of the body of the 30S subunit. In terms of biological role, with S5 and S12 plays an important role in translational accuracy. This is Small ribosomal subunit protein uS4 from Desulforamulus reducens (strain ATCC BAA-1160 / DSM 100696 / MI-1) (Desulfotomaculum reducens).